A 229-amino-acid chain; its full sequence is Large ribosomal subunit protein uL1 (229 aa).

The protein belongs to the universal ribosomal protein uL1 family. In terms of assembly, part of the 50S ribosomal subunit.

Functionally, binds directly to 23S rRNA. The L1 stalk is quite mobile in the ribosome, and is involved in E site tRNA release. In terms of biological role, protein L1 is also a translational repressor protein, it controls the translation of the L11 operon by binding to its mRNA. In Clostridium acetobutylicum (strain ATCC 824 / DSM 792 / JCM 1419 / IAM 19013 / LMG 5710 / NBRC 13948 / NRRL B-527 / VKM B-1787 / 2291 / W), this protein is Large ribosomal subunit protein uL1.